The chain runs to 253 residues: Short-chain dehydrogenase/reductase ATR9 (253 aa).

The NADP(+) site is built by Ser-15, Ser-16, Ile-18, Ser-38, Asn-39, Arg-42, Asp-65, and Lys-129. Ser-147 functions as the Proton donor in the catalytic mechanism. Residue Thr-194 coordinates NADP(+).

This sequence belongs to the short-chain dehydrogenases/reductases (SDR) family.

It participates in mycotoxin biosynthesis. Short-chain dehydrogenase/reductase; part of the core atranone cluster (CAC) which products are predicted to catalyze most or all steps of mycotoxin atranone synthesis, starting from geranylgeranyl pyrophosphate (GGPP). The initial cyclization of GGPP to dolabellane is probably performed by the terpene cyclase ATR13. The Baeyer-Villiger oxidation near the end of the atranone synthesis, which converts atranones D and E to atranones F and G is predicted to be catalyzed by the monooxygenase ATR8. Of the CAC's other predicted gene products, the reducing PKS ATR6 might synthesize a polyketide chain. This polyketide is probably transferred onto the atranone backbone by the polyketide transferase ATR5. Other predicted CAC products include 4 oxygenases (ATR2, ATR3, ATR4, and ATR14), 3 short-chain reductases (ATR7, ATR9, and ATR10), and a methyltransferase (ATR12). These may all be involved in the various steps of atranone biosynthesis, although their specific roles must await experimental determination. The chain is Short-chain dehydrogenase/reductase ATR9 from Stachybotrys chlorohalonatus (strain IBT 40285).